Reading from the N-terminus, the 166-residue chain is MPPKLDPSQIVDVYVRVTGGEVGAASSLAPKIGPLGLAPKKIGEDIAKETAKEWKGLRVTVKLTVQNRQAKVTVVPSAAALVIKALKEPERDRKKVKNIKHNGNISFDDVTEIARIMRPRSIAKELSGTVREILGTCVSVGCTVDGKDPKDIQQEIQDGEVEIPEN.

Belongs to the universal ribosomal protein uL11 family.

Its function is as follows. Binds directly to 26S ribosomal RNA. This chain is Large ribosomal subunit protein uL11z (RPL12A), found in Arabidopsis thaliana (Mouse-ear cress).